A 484-amino-acid chain; its full sequence is Sperm motility kinase 1 (484 aa).

One can recognise a Protein kinase domain in the interval 8-256 (YEMLETIGQG…VAEVMVHPWI (249 aa)). Residues 14–22 (IGQGGCAKV) and Lys37 each bind ATP. Asp127 serves as the catalytic Proton acceptor. The region spanning 274–314 (KPDPAIVKPMGHIGFQAQDIEDSLRQRKFNETMASYCLLKK) is the UBA domain. Positions 423–434 (IDESTEGHTSAS) are enriched in polar residues. Positions 423 to 447 (IDESTEGHTSASAEDKPVHSRGWPR) are disordered.

Belongs to the protein kinase superfamily. Tyr protein kinase family. Smok subfamily. Testis-specific. Expressed in the testis from 22 days postpartum (22 dpp).

The enzyme catalyses L-seryl-[protein] + ATP = O-phospho-L-seryl-[protein] + ADP + H(+). It catalyses the reaction L-threonyl-[protein] + ATP = O-phospho-L-threonyl-[protein] + ADP + H(+). In terms of biological role, may play a role in sperm motility, especially in the regulation of flagellar function. This chain is Sperm motility kinase 1 (Smok1), found in Mus musculus (Mouse).